The chain runs to 127 residues: Protein yippee-like 4 (127 aa).

Residues 27-124 (RTYSCVHCRA…IEMSHMVKDN (98 aa)) enclose the Yippee domain. Zn(2+) contacts are provided by cysteine 31, cysteine 34, cysteine 87, and cysteine 90. Threonine 92 and threonine 93 each carry phosphothreonine. Tyrosine 98 carries the post-translational modification Phosphotyrosine.

Belongs to the yippee family.

Its subcellular location is the nucleus. It is found in the nucleolus. The sequence is that of Protein yippee-like 4 (YPEL4) from Chlorocebus aethiops (Green monkey).